Reading from the N-terminus, the 255-residue chain is MTTEPGDRAWVLHHYPYGDTSLIVELFTRTQGRLGVLAKGARRARSALARIEAGRPLWVRWLGRGELPVLAQAEELGPFLPLNPLQNLSLFYVNELLLRLTQRRDPFPDLFQVYEETIDALCSEPGEGWYLRRFERRLLENLGWAPDLAHCAECGRSPDAASSEHWLYQAAHGVFCRAHAPDAAVAIEAAALVWLRGAMQTRSMPVWNSSLRRCLEQELLVHLGGRPLESRRLLTAYLRRTQPAMTIQKREEHSE.

Belongs to the RecO family.

Its function is as follows. Involved in DNA repair and RecF pathway recombination. This chain is DNA repair protein RecO, found in Acidithiobacillus ferrooxidans (strain ATCC 23270 / DSM 14882 / CIP 104768 / NCIMB 8455) (Ferrobacillus ferrooxidans (strain ATCC 23270)).